Consider the following 452-residue polypeptide: tRNA modification GTPase MnmE (452 aa).

(6S)-5-formyl-5,6,7,8-tetrahydrofolate is bound by residues arginine 25, glutamate 81, and lysine 120. Residues 216-375 enclose the TrmE-type G domain; that stretch reads GITVVIAGEP…LKNHLKNTAG (160 aa). Residue asparagine 226 coordinates K(+). Residues 226–231, 245–251, and 270–273 contribute to the GTP site; these read NVGKSS, TDIAGTT, and DTAG. Serine 230 lines the Mg(2+) pocket. K(+) is bound by residues threonine 245, isoleucine 247, and threonine 250. Threonine 251 is a binding site for Mg(2+). Residue lysine 452 coordinates (6S)-5-formyl-5,6,7,8-tetrahydrofolate.

Belongs to the TRAFAC class TrmE-Era-EngA-EngB-Septin-like GTPase superfamily. TrmE GTPase family. As to quaternary structure, homodimer. Heterotetramer of two MnmE and two MnmG subunits. K(+) is required as a cofactor.

Its subcellular location is the cytoplasm. Exhibits a very high intrinsic GTPase hydrolysis rate. Involved in the addition of a carboxymethylaminomethyl (cmnm) group at the wobble position (U34) of certain tRNAs, forming tRNA-cmnm(5)s(2)U34. The polypeptide is tRNA modification GTPase MnmE (Coxiella burnetii (strain Dugway 5J108-111)).